The primary structure comprises 365 residues: UBX domain-containing protein 2B (365 aa).

The tract at residues Met1 to Phe97 is disordered. 2 stretches are compositionally biased toward basic and acidic residues: residues Asp50–Thr63 and Leu73–Gln95. The SEP domain occupies Asp175–Val240. The UBX domain occupies Asp286–Gln363.

The protein belongs to the NSFL1C family.

The protein resides in the nucleus. The protein localises to the cytoplasm. Its subcellular location is the cytosol. It is found in the endoplasmic reticulum. It localises to the golgi apparatus. The protein resides in the cytoskeleton. The protein localises to the microtubule organizing center. Its subcellular location is the centrosome. Adapter protein required for Golgi and endoplasmic reticulum biogenesis. Involved in Golgi and endoplasmic reticulum maintenance during interphase and in their reassembly at the end of mitosis. Regulates the centrosomal levels of kinase AURKA/Aurora A during mitotic progression by promoting AURKA removal from centrosomes in prophase. Also, regulates spindle orientation during mitosis. The polypeptide is UBX domain-containing protein 2B (UBXN2B) (Gallus gallus (Chicken)).